An 860-amino-acid chain; its full sequence is Leucine--tRNA ligase (860 aa).

Residues 42-52 (PYPSGRLHMGH) carry the 'HIGH' region motif. Residues 619 to 623 (KMSKS) carry the 'KMSKS' region motif. K622 is an ATP binding site.

Belongs to the class-I aminoacyl-tRNA synthetase family.

It is found in the cytoplasm. The enzyme catalyses tRNA(Leu) + L-leucine + ATP = L-leucyl-tRNA(Leu) + AMP + diphosphate. The polypeptide is Leucine--tRNA ligase (Escherichia coli O9:H4 (strain HS)).